The sequence spans 301 residues: Methionyl-tRNA formyltransferase (301 aa).

109–112 (SLLP) serves as a coordination point for (6S)-5,6,7,8-tetrahydrofolate.

The protein belongs to the Fmt family.

It catalyses the reaction L-methionyl-tRNA(fMet) + (6R)-10-formyltetrahydrofolate = N-formyl-L-methionyl-tRNA(fMet) + (6S)-5,6,7,8-tetrahydrofolate + H(+). Functionally, attaches a formyl group to the free amino group of methionyl-tRNA(fMet). The formyl group appears to play a dual role in the initiator identity of N-formylmethionyl-tRNA by promoting its recognition by IF2 and preventing the misappropriation of this tRNA by the elongation apparatus. The protein is Methionyl-tRNA formyltransferase of Anaplasma marginale (strain St. Maries).